A 148-amino-acid polypeptide reads, in one-letter code: Ribonuclease pancreatic (148 aa).

Positions 1–25 (MGLEKSLILLPLLVLVFGWVQPSLG) are cleaved as a signal peptide. Positions 32 and 35 each coordinate substrate. His-37 functions as the Proton acceptor in the catalytic mechanism. Disulfide bonds link Cys-50–Cys-108, Cys-64–Cys-119, Cys-82–Cys-134, and Cys-89–Cys-96. An N-linked (GlcNAc...) asparagine glycan is attached at Asn-58. 65–69 (KPVNT) provides a ligand contact to substrate. Asn-86 carries N-linked (GlcNAc...) asparagine glycosylation. Positions 90 and 109 each coordinate substrate. His-143 (proton donor) is an active-site residue.

It belongs to the pancreatic ribonuclease family. Monomer. Interacts with and forms tight 1:1 complexes with RNH1. Dimerization of two such complexes may occur. Interaction with RNH1 inhibits this protein. As to expression, pancreas.

It is found in the secreted. It carries out the reaction an [RNA] containing cytidine + H2O = an [RNA]-3'-cytidine-3'-phosphate + a 5'-hydroxy-ribonucleotide-3'-[RNA].. The enzyme catalyses an [RNA] containing uridine + H2O = an [RNA]-3'-uridine-3'-phosphate + a 5'-hydroxy-ribonucleotide-3'-[RNA].. Functionally, endonuclease that catalyzes the cleavage of RNA on the 3' side of pyrimidine nucleotides. Acts on single-stranded and double-stranded RNA. This chain is Ribonuclease pancreatic (RNASE1), found in Myodes glareolus (Bank vole).